The sequence spans 193 residues: Holliday junction branch migration complex subunit RuvA (193 aa).

The domain I stretch occupies residues Met-1–Leu-64. The segment at Thr-65–Leu-139 is domain II. A flexible linker region spans residues Leu-139 to Ala-143. The segment at Ser-144–Ala-193 is domain III.

It belongs to the RuvA family. In terms of assembly, homotetramer. Forms an RuvA(8)-RuvB(12)-Holliday junction (HJ) complex. HJ DNA is sandwiched between 2 RuvA tetramers; dsDNA enters through RuvA and exits via RuvB. An RuvB hexamer assembles on each DNA strand where it exits the tetramer. Each RuvB hexamer is contacted by two RuvA subunits (via domain III) on 2 adjacent RuvB subunits; this complex drives branch migration. In the full resolvosome a probable DNA-RuvA(4)-RuvB(12)-RuvC(2) complex forms which resolves the HJ.

The protein resides in the cytoplasm. Functionally, the RuvA-RuvB-RuvC complex processes Holliday junction (HJ) DNA during genetic recombination and DNA repair, while the RuvA-RuvB complex plays an important role in the rescue of blocked DNA replication forks via replication fork reversal (RFR). RuvA specifically binds to HJ cruciform DNA, conferring on it an open structure. The RuvB hexamer acts as an ATP-dependent pump, pulling dsDNA into and through the RuvAB complex. HJ branch migration allows RuvC to scan DNA until it finds its consensus sequence, where it cleaves and resolves the cruciform DNA. The protein is Holliday junction branch migration complex subunit RuvA of Burkholderia cenocepacia (strain ATCC BAA-245 / DSM 16553 / LMG 16656 / NCTC 13227 / J2315 / CF5610) (Burkholderia cepacia (strain J2315)).